A 184-amino-acid polypeptide reads, in one-letter code: GTP cyclohydrolase 1 (184 aa).

Positions 74, 77, and 145 each coordinate Zn(2+).

Belongs to the GTP cyclohydrolase I family. In terms of assembly, toroid-shaped homodecamer, composed of two pentamers of five dimers.

It carries out the reaction GTP + H2O = 7,8-dihydroneopterin 3'-triphosphate + formate + H(+). It participates in cofactor biosynthesis; 7,8-dihydroneopterin triphosphate biosynthesis; 7,8-dihydroneopterin triphosphate from GTP: step 1/1. This chain is GTP cyclohydrolase 1 (folE), found in Aquifex aeolicus (strain VF5).